The chain runs to 425 residues: MLDLKRIRTDFDTVAAKLKNRGVSEDTLTHLKELDEKRRTLLVQSEELKAERNIASAAIAQAKRQKEDATQQIADMQKVSADIKTIDNQLVAIDQQVTDIITVLPNTPHDSVPVGADEEDNVEIRRWGTPRDFNFEVKAHWDLGEDLDILDWERGAKVTGARFLFYKNLGARLERALYNFMLDEHIKEGYQEIITPYMVNHDSMFGTGQYPKFKEDTFELADTNFVLIPTAEVPLTNYYRGEILDGKELPIYFTAMSPSFRSEAGSAGRDTRGLIRLHQFHKVEMVKFAKPEESYQELEKMTANAENILQKLGLPYRVISLCTGDMGFSAAKTYDLEVWIPAQNTYREISSCSNTEDFQARRAQIRYRDEADGKVKLLHTLNGSGLAVGRTVAAILENYQNEDGSVTIPEVLRPYMGGETVISPK.

Residue 230–232 coordinates L-serine; sequence TAE. 261 to 263 lines the ATP pocket; sequence RSE. Residue Glu-284 coordinates L-serine. 348–351 is a binding site for ATP; the sequence is EISS. Residue Ser-384 participates in L-serine binding.

The protein belongs to the class-II aminoacyl-tRNA synthetase family. Type-1 seryl-tRNA synthetase subfamily. Homodimer. The tRNA molecule binds across the dimer.

Its subcellular location is the cytoplasm. The catalysed reaction is tRNA(Ser) + L-serine + ATP = L-seryl-tRNA(Ser) + AMP + diphosphate + H(+). It carries out the reaction tRNA(Sec) + L-serine + ATP = L-seryl-tRNA(Sec) + AMP + diphosphate + H(+). It functions in the pathway aminoacyl-tRNA biosynthesis; selenocysteinyl-tRNA(Sec) biosynthesis; L-seryl-tRNA(Sec) from L-serine and tRNA(Sec): step 1/1. Catalyzes the attachment of serine to tRNA(Ser). Is also able to aminoacylate tRNA(Sec) with serine, to form the misacylated tRNA L-seryl-tRNA(Sec), which will be further converted into selenocysteinyl-tRNA(Sec). The polypeptide is Serine--tRNA ligase (Streptococcus pyogenes serotype M12 (strain MGAS2096)).